Reading from the N-terminus, the 227-residue chain is Ribose-5-phosphate isomerase A (227 aa).

Substrate is bound by residues 30-33 (TGST), 86-89 (DGAD), and 99-104 (KGMGGA). Glu108 serves as the catalytic Proton acceptor. Residue Lys126 coordinates substrate.

Belongs to the ribose 5-phosphate isomerase family. Homodimer.

It catalyses the reaction aldehydo-D-ribose 5-phosphate = D-ribulose 5-phosphate. It participates in carbohydrate degradation; pentose phosphate pathway; D-ribose 5-phosphate from D-ribulose 5-phosphate (non-oxidative stage): step 1/1. In terms of biological role, involved in the first step of the non-oxidative branch of the pentose phosphate pathway. It catalyzes the reversible conversion of ribose-5-phosphate to ribulose 5-phosphate. Can also act on D-ribose-5-diphosphate and D-ribose-5-triphosphate as substrate. The protein is Ribose-5-phosphate isomerase A of Thermus thermophilus (strain ATCC BAA-163 / DSM 7039 / HB27).